Reading from the N-terminus, the 196-residue chain is ATP-dependent Clp protease proteolytic subunit (196 aa).

The active-site Nucleophile is the serine 101. Histidine 126 is an active-site residue.

It belongs to the peptidase S14 family. As to quaternary structure, component of the chloroplastic Clp protease core complex.

It is found in the plastid. It localises to the chloroplast stroma. It carries out the reaction Hydrolysis of proteins to small peptides in the presence of ATP and magnesium. alpha-casein is the usual test substrate. In the absence of ATP, only oligopeptides shorter than five residues are hydrolyzed (such as succinyl-Leu-Tyr-|-NHMec, and Leu-Tyr-Leu-|-Tyr-Trp, in which cleavage of the -Tyr-|-Leu- and -Tyr-|-Trp bonds also occurs).. Its function is as follows. Cleaves peptides in various proteins in a process that requires ATP hydrolysis. Has a chymotrypsin-like activity. Plays a major role in the degradation of misfolded proteins. This Panax ginseng (Korean ginseng) protein is ATP-dependent Clp protease proteolytic subunit.